The chain runs to 166 residues: Crossover junction endodeoxyribonuclease RuvC (166 aa).

Catalysis depends on residues aspartate 7, glutamate 67, and aspartate 139. Aspartate 7, glutamate 67, and aspartate 139 together coordinate Mg(2+).

Belongs to the RuvC family. Homodimer which binds Holliday junction (HJ) DNA. The HJ becomes 2-fold symmetrical on binding to RuvC with unstacked arms; it has a different conformation from HJ DNA in complex with RuvA. In the full resolvosome a probable DNA-RuvA(4)-RuvB(12)-RuvC(2) complex forms which resolves the HJ. It depends on Mg(2+) as a cofactor.

The protein resides in the cytoplasm. It catalyses the reaction Endonucleolytic cleavage at a junction such as a reciprocal single-stranded crossover between two homologous DNA duplexes (Holliday junction).. The RuvA-RuvB-RuvC complex processes Holliday junction (HJ) DNA during genetic recombination and DNA repair. Endonuclease that resolves HJ intermediates. Cleaves cruciform DNA by making single-stranded nicks across the HJ at symmetrical positions within the homologous arms, yielding a 5'-phosphate and a 3'-hydroxyl group; requires a central core of homology in the junction. The consensus cleavage sequence is 5'-(A/T)TT(C/G)-3'. Cleavage occurs on the 3'-side of the TT dinucleotide at the point of strand exchange. HJ branch migration catalyzed by RuvA-RuvB allows RuvC to scan DNA until it finds its consensus sequence, where it cleaves and resolves the cruciform DNA. In Paramagnetospirillum magneticum (strain ATCC 700264 / AMB-1) (Magnetospirillum magneticum), this protein is Crossover junction endodeoxyribonuclease RuvC.